The sequence spans 287 residues: PsbP domain-containing protein 1, chloroplastic (287 aa).

Belongs to the PsbP family. In terms of assembly, partially associated with photosystem I (PSI) complex, but is not a subunit of the complex. Interacts with PsaA and PsaB, but not with PasF.

It localises to the plastid. The protein localises to the chloroplast thylakoid lumen. Its function is as follows. Photosystem I assembly factor that assists the proper folding and integration of PsaB and PsaA into the thylakoid membrane. This chain is PsbP domain-containing protein 1, chloroplastic (PPD1), found in Arabidopsis thaliana (Mouse-ear cress).